We begin with the raw amino-acid sequence, 130 residues long: Protein ApaG (130 aa).

The ApaG domain occupies 3–127 (RALTRDIEVT…FSLDSPGLVR (125 aa)).

The chain is Protein ApaG from Sinorhizobium fredii (strain NBRC 101917 / NGR234).